The primary structure comprises 231 residues: Probable transaldolase (231 aa).

Catalysis depends on K83, which acts as the Schiff-base intermediate with substrate.

This sequence belongs to the transaldolase family. Type 3B subfamily.

The protein localises to the cytoplasm. It carries out the reaction D-sedoheptulose 7-phosphate + D-glyceraldehyde 3-phosphate = D-erythrose 4-phosphate + beta-D-fructose 6-phosphate. It functions in the pathway carbohydrate degradation; pentose phosphate pathway; D-glyceraldehyde 3-phosphate and beta-D-fructose 6-phosphate from D-ribose 5-phosphate and D-xylulose 5-phosphate (non-oxidative stage): step 2/3. Functionally, transaldolase is important for the balance of metabolites in the pentose-phosphate pathway. The protein is Probable transaldolase of Rhodospirillum centenum (strain ATCC 51521 / SW).